A 388-amino-acid polypeptide reads, in one-letter code: MESYYYVFFIILSIIFIVPNLLKKFNIPAITSIMIAGIIIGPYGLNILQVDETLKILADFGAIMLMFLAGLEVDNETLKQEFKNSLILSLFSLLIPGVGGYLIGQYLGLGFIGSLLYAVIFASHSVAIVYAILEELKMVKTRLGTIILSATIIVDLFTLLLLSVVIKLGIGGENVGTFLLETVLYIGVLLLAIPSLSKNILGVFEKLHAQRIHYVLFIIFIAIIVGEVIGIHPIVGAFICGVAVSEALTKEEHDELLNKNLNAIGYGFFIPIFFLVLGMETNIRVIFNLSNLELLLITLISAVALKFISGFIALRILGFDRIKNTIGGLLTVPKISASLVAASIGRELGLIGNEIFVTIVALSVITATITPIVVKHIFVAKCNKKAKN.

Helical transmembrane passes span 2-22, 27-47, 53-73, 81-101, 102-122, 146-166, 175-195, 215-235, 263-283, 294-314, 325-345, and 354-374; these read ESYY…PNLL, IPAI…GLNI, TLKI…GLEV, EFKN…VGGY, LIGQ…VIFA, IILS…SVVI, VGTF…AIPS, VLFI…HPIV, AIGY…ETNI, LLLI…FIAL, TIGG…ASIG, and EIFV…PIVV.

The protein belongs to the monovalent cation:proton antiporter 1 (CPA1) transporter (TC 2.A.36) family.

It is found in the cell membrane. Its function is as follows. This is probably a Na(+)/H(+) antiporter. The chain is Probable Na(+)/H(+) antiporter 3 from Methanocaldococcus jannaschii (strain ATCC 43067 / DSM 2661 / JAL-1 / JCM 10045 / NBRC 100440) (Methanococcus jannaschii).